The chain runs to 596 residues: Probable lysosomal cobalamin transporter (596 aa).

The next 10 helical transmembrane spans lie at 7–27 (AFIW…AAIF), 46–66 (IITL…IALV), 95–115 (IVYY…IPFT), 145–165 (TLFF…APVA), 196–216 (LLIS…LALL), 313–333 (LVGG…MLIT), 350–370 (ILGS…SSIV), 376–396 (VLMA…IAVI), 420–440 (MATV…AMII), and 507–527 (FFGA…LIVF). The segment at 566–596 (WQDIRGKAKNQTPSRGAAGRGIRGDDDHDDD) is disordered. The span at 587 to 596 (IRGDDDHDDD) shows a compositional bias: basic and acidic residues.

Belongs to the LIMR family. LMBRD1 subfamily.

It is found in the lysosome membrane. In terms of biological role, probable lysosomal cobalamin transporter. Required to export cobalamin from lysosomes allowing its conversion to cofactors. The polypeptide is Probable lysosomal cobalamin transporter (Sclerotinia sclerotiorum (strain ATCC 18683 / 1980 / Ss-1) (White mold)).